We begin with the raw amino-acid sequence, 337 residues long: Ycf66-like protein (337 aa).

Positions 111-337 (TEAELDQLEP…GADDQERFDY (227 aa)) are disordered. A compositionally biased stretch (acidic residues) spans 113–123 (AELDQLEPEDE). 2 stretches are compositionally biased toward basic and acidic residues: residues 133–143 (RGYDDDARSGR) and 253–269 (FGDR…RPYE). Over residues 304-316 (QSRSGNPRSQRPS) the composition is skewed to polar residues.

Belongs to the ycf66 family.

The sequence is that of Ycf66-like protein from Synechocystis sp. (strain ATCC 27184 / PCC 6803 / Kazusa).